The following is a 482-amino-acid chain: tRNA sulfurtransferase (482 aa).

A THUMP domain is found at 61–165 (LTIRDALTRI…DDRLLLIKGR (105 aa)). ATP is bound by residues 183 to 184 (LI), Lys-265, Gly-287, and Gln-296. The cysteines at positions 344 and 456 are disulfide-linked. Residues 404–482 (FGPNDVILDI…GFNNVKVYRP (79 aa)) enclose the Rhodanese domain. The Cysteine persulfide intermediate role is filled by Cys-456.

Belongs to the ThiI family.

It is found in the cytoplasm. It catalyses the reaction [ThiI sulfur-carrier protein]-S-sulfanyl-L-cysteine + a uridine in tRNA + 2 reduced [2Fe-2S]-[ferredoxin] + ATP + H(+) = [ThiI sulfur-carrier protein]-L-cysteine + a 4-thiouridine in tRNA + 2 oxidized [2Fe-2S]-[ferredoxin] + AMP + diphosphate. The catalysed reaction is [ThiS sulfur-carrier protein]-C-terminal Gly-Gly-AMP + S-sulfanyl-L-cysteinyl-[cysteine desulfurase] + AH2 = [ThiS sulfur-carrier protein]-C-terminal-Gly-aminoethanethioate + L-cysteinyl-[cysteine desulfurase] + A + AMP + 2 H(+). The protein operates within cofactor biosynthesis; thiamine diphosphate biosynthesis. Functionally, catalyzes the ATP-dependent transfer of a sulfur to tRNA to produce 4-thiouridine in position 8 of tRNAs, which functions as a near-UV photosensor. Also catalyzes the transfer of sulfur to the sulfur carrier protein ThiS, forming ThiS-thiocarboxylate. This is a step in the synthesis of thiazole, in the thiamine biosynthesis pathway. The sulfur is donated as persulfide by IscS. The polypeptide is tRNA sulfurtransferase (Shigella flexneri).